The following is a 503-amino-acid chain: Lysine--tRNA ligase (503 aa).

Residues Glu-414 and Glu-421 each contribute to the Mg(2+) site.

Belongs to the class-II aminoacyl-tRNA synthetase family. Homodimer. The cofactor is Mg(2+).

The protein resides in the cytoplasm. The catalysed reaction is tRNA(Lys) + L-lysine + ATP = L-lysyl-tRNA(Lys) + AMP + diphosphate. This Neisseria meningitidis serogroup B (strain ATCC BAA-335 / MC58) protein is Lysine--tRNA ligase.